Here is a 453-residue protein sequence, read N- to C-terminus: Kynurenine 3-monooxygenase (453 aa).

Belongs to the aromatic-ring hydroxylase family. KMO subfamily. It depends on FAD as a cofactor.

The catalysed reaction is L-kynurenine + NADPH + O2 + H(+) = 3-hydroxy-L-kynurenine + NADP(+) + H2O. It functions in the pathway cofactor biosynthesis; NAD(+) biosynthesis; quinolinate from L-kynurenine: step 1/3. Its function is as follows. Catalyzes the hydroxylation of L-kynurenine (L-Kyn) to form 3-hydroxy-L-kynurenine (L-3OHKyn). Required for synthesis of quinolinic acid. The polypeptide is Kynurenine 3-monooxygenase (Salinispora tropica (strain ATCC BAA-916 / DSM 44818 / JCM 13857 / NBRC 105044 / CNB-440)).